A 166-amino-acid chain; its full sequence is Protein-export protein SecB (166 aa).

The protein belongs to the SecB family. Homotetramer, a dimer of dimers. One homotetramer interacts with 1 SecA dimer.

It localises to the cytoplasm. Its function is as follows. One of the proteins required for the normal export of preproteins out of the cell cytoplasm. It is a molecular chaperone that binds to a subset of precursor proteins, maintaining them in a translocation-competent state. It also specifically binds to its receptor SecA. The sequence is that of Protein-export protein SecB from Acidiphilium cryptum (strain JF-5).